Consider the following 690-residue polypeptide: Lipase 2 (690 aa).

The signal sequence occupies residues 1-37 (MLRGQEERKYSIRKYSIGVVSVLAATMFVVSSHEAQA). Residues 52-71 (LNQPGEQGNAITSHQMQSGK) are compositionally biased toward polar residues. The disordered stretch occupies residues 52-266 (LNQPGEQGNA…KPTDKNTDNK (215 aa)). Over residues 72–81 (QLDDMHKENG) the composition is skewed to basic and acidic residues. 3 stretches are compositionally biased toward polar residues: residues 82–114 (KSGT…NDNQ), 124–171 (SKQS…QPSI), and 185–206 (PTST…AQDA). 2 stretches are compositionally biased toward basic and acidic residues: residues 225–237 (IDAK…RQSE) and 257–266 (KPTDKNTDNK). Catalysis depends on charge relay system residues serine 412 and histidine 645.

It belongs to the AB hydrolase superfamily. Lipase family.

It localises to the secreted. The catalysed reaction is a triacylglycerol + H2O = a diacylglycerol + a fatty acid + H(+). The chain is Lipase 2 (lip2) from Staphylococcus aureus (strain NCTC 8325 / PS 47).